Here is a 687-residue protein sequence, read N- to C-terminus: DNA ligase (687 aa).

NAD(+) contacts are provided by residues D34–D38, S83–L84, and E117. K119 acts as the N6-AMP-lysine intermediate in catalysis. NAD(+) contacts are provided by R140, E182, K298, and K322. Residues C416, C419, C434, and C439 each contribute to the Zn(2+) site. The region spanning E609–E687 is the BRCT domain.

It belongs to the NAD-dependent DNA ligase family. LigA subfamily. It depends on Mg(2+) as a cofactor. Mn(2+) is required as a cofactor.

The enzyme catalyses NAD(+) + (deoxyribonucleotide)n-3'-hydroxyl + 5'-phospho-(deoxyribonucleotide)m = (deoxyribonucleotide)n+m + AMP + beta-nicotinamide D-nucleotide.. Its function is as follows. DNA ligase that catalyzes the formation of phosphodiester linkages between 5'-phosphoryl and 3'-hydroxyl groups in double-stranded DNA using NAD as a coenzyme and as the energy source for the reaction. It is essential for DNA replication and repair of damaged DNA. This is DNA ligase from Anaeromyxobacter dehalogenans (strain 2CP-C).